The sequence spans 202 residues: Small ribosomal subunit protein uS4 (202 aa).

Residues 1-13 are compositionally biased toward basic residues; the sequence is MSRYRGPRLRITR. Residues 1-43 are disordered; sequence MSRYRGPRLRITRRLGDLPGLTRKAAKRSHPPGQHGQARRKRS. The 63-residue stretch at 90–152 folds into the S4 RNA-binding domain; the sequence is NRLDNVCFRL…KASKQLAQAN (63 aa).

Belongs to the universal ribosomal protein uS4 family. Part of the 30S ribosomal subunit. Contacts protein S5. The interaction surface between S4 and S5 is involved in control of translational fidelity.

One of the primary rRNA binding proteins, it binds directly to 16S rRNA where it nucleates assembly of the body of the 30S subunit. Its function is as follows. With S5 and S12 plays an important role in translational accuracy. This is Small ribosomal subunit protein uS4 from Prochlorococcus marinus (strain NATL2A).